A 177-amino-acid polypeptide reads, in one-letter code: Large ribosomal subunit protein uL6 (177 aa).

Belongs to the universal ribosomal protein uL6 family. Part of the 50S ribosomal subunit.

Functionally, this protein binds to the 23S rRNA, and is important in its secondary structure. It is located near the subunit interface in the base of the L7/L12 stalk, and near the tRNA binding site of the peptidyltransferase center. The sequence is that of Large ribosomal subunit protein uL6 from Magnetococcus marinus (strain ATCC BAA-1437 / JCM 17883 / MC-1).